Here is an 806-residue protein sequence, read N- to C-terminus: Sperm head and tail associated protein (806 aa).

4 disordered regions span residues 1–36, 257–329, 428–496, and 707–806; these read MNSS…PSSC, TPAS…MSGS, LNNQ…CPQP, and SQIN…SKKK. Polar residues predominate over residues 13 to 27; that stretch reads APSTSPQADCPNNYS. The segment covering 277–290 has biased composition (low complexity); it reads PPLSSASSPPSGNP. Over residues 320–329 the composition is skewed to polar residues; the sequence is LSSQAGMSGS. Residues 521–806 are interaction with CRISP2; sequence KEPPPETAVL…QIKSPHSKKK (286 aa). Low complexity-rich tracts occupy residues 710 to 723 and 733 to 754; these read NHQN…KNSS and RRGA…SSTQ. Residues 773–788 show a composition bias toward polar residues; the sequence is QSQSPADGKIESQSKS.

In terms of assembly, interacts with CRISP2. As to expression, isoforms 3 and 4 are expressed in testis (at protein level).

It localises to the cytoplasm. Plays a role during spermatogenesis. This Mus musculus (Mouse) protein is Sperm head and tail associated protein (Nsun4).